We begin with the raw amino-acid sequence, 456 residues long: Probable mannan endo-1,4-beta-mannosidase F (456 aa).

The signal sequence occupies residues 1–18; that stretch reads MRPLSSAALLSAIGAVAA. A CBM1 domain is found at 19-54; the sequence is QVGPWGQCGGQSYTGGTSCVSGWACVFLNDWYSQCQ. Residues 79 to 110 form a disordered region; sequence STSVSATAPPSSTSSSTASVSSSTSSTPIPTS. Residues 79–113 are ser-rich linker; the sequence is STSVSATAPPSSTSSSTASVSSSTSSTPIPTSSGS. The catalytic stretch occupies residues 114-456; the sequence is FVKAEGLKFN…CAVIDHVSRI (343 aa). Substrate is bound by residues tryptophan 166 and asparagine 280. Glutamate 281 functions as the Proton donor in the catalytic mechanism. Tyrosine 356 is a substrate binding site. The Nucleophile role is filled by glutamate 390. A substrate-binding site is contributed by tryptophan 420.

This sequence belongs to the glycosyl hydrolase 5 (cellulase A) family.

The protein resides in the secreted. It carries out the reaction Random hydrolysis of (1-&gt;4)-beta-D-mannosidic linkages in mannans, galactomannans and glucomannans.. In terms of biological role, endo-1,4-mannanase, a crucial enzyme for depolymerization of seed galactomannans and wood galactoglucomannans. In Neosartorya fischeri (strain ATCC 1020 / DSM 3700 / CBS 544.65 / FGSC A1164 / JCM 1740 / NRRL 181 / WB 181) (Aspergillus fischerianus), this protein is Probable mannan endo-1,4-beta-mannosidase F (manF).